Consider the following 334-residue polypeptide: HTH-type transcriptional repressor PurR (334 aa).

An HTH lacI-type domain is found at 2–56; the sequence is ATIKDVARLAGVSTTTVSHVINKTRFVAETTQEKVMKAVDELNYAPSAVARSLKC. A DNA-binding region (H-T-H motif) is located at residues 4-23; sequence IKDVARLAGVSTTTVSHVIN. A DNA-binding region spans residues 48 to 56; the sequence is SAVARSLKC. Residues F73, K189, F220, and D274 each contribute to the hypoxanthine site.

Homodimer.

Its pathway is purine metabolism; purine nucleotide biosynthesis [regulation]. In terms of biological role, is the main repressor of the genes involved in the de novo synthesis of purine nucleotides, regulating purB, purC, purEK, purF, purHD, purL, purMN and guaBA expression. PurR is allosterically activated to bind its cognate DNA by binding the purine corepressors, hypoxanthine or guanine, thereby effecting transcription repression. The polypeptide is HTH-type transcriptional repressor PurR (Vibrio campbellii (strain ATCC BAA-1116)).